A 148-amino-acid polypeptide reads, in one-letter code: UPF0260 protein PM0539 (148 aa).

The protein belongs to the UPF0260 family.

The sequence is that of UPF0260 protein PM0539 from Pasteurella multocida (strain Pm70).